The following is a 366-amino-acid chain: Peptide chain release factor 1 (366 aa).

Glutamine 230 is subject to N5-methylglutamine. Composition is skewed to basic and acidic residues over residues 283–293 (ARDAQEARDRA) and 315–328 (VTDH…KNHP). Residues 283–335 (ARDAQEARDRAAQVGSGERSEKIRTYNYPQNRVTDHRLEGDSKNHPLDSVMAG) are disordered.

It belongs to the prokaryotic/mitochondrial release factor family. In terms of processing, methylated by PrmC. Methylation increases the termination efficiency of RF1.

It is found in the cytoplasm. Its function is as follows. Peptide chain release factor 1 directs the termination of translation in response to the peptide chain termination codons UAG and UAA. The polypeptide is Peptide chain release factor 1 (Deinococcus deserti (strain DSM 17065 / CIP 109153 / LMG 22923 / VCD115)).